The following is a 71-amino-acid chain: Conotoxin LvVIIB (71 aa).

A signal peptide spans 1 to 17 (VLIIAVLFLAASELVTA). A propeptide spanning residues 18–42 (DYTRDEWQYRAASLRDAMRNFRDTR) is cleaved from the precursor. Disulfide bonds link Cys43-Cys57, Cys50-Cys62, and Cys56-Cys69.

This sequence belongs to the conotoxin O1 superfamily. Expressed by the venom duct.

It localises to the secreted. This is Conotoxin LvVIIB from Conus lividus (Livid cone).